A 499-amino-acid polypeptide reads, in one-letter code: MFKIDEEKCKKCRMCVKECPVHAVYYEKKDKGAIVEITEKCVECGICKRVCKFGAIENDAPLESVITCSSCPIQCKVPLGETGACTRYRNVGGKLVRDRELVVEALEQKEAADNIKKPIITAVGAGTNYPCSKPAPHIVSECRDGVDVVTVVTEAPLSYSGLVIKLDTNTYIGEEGDPVYRDGKVVGMVNTEEYGSKMIAIGGANRLTGDNGFATARTIVELANGEEVELKVNKKIVLKLKAGVAPVIDGVEESIMRIGCGSATVGLFAKRMKDAVDECIVIDHHVIGLCSEHLAGEAVGMTWSGIIPNATKSSRGRYFGGHGSGIGGTSLETPRDAIKGADMSIAKAGMQVMVVNTTGEIYALFELKADGSFDEIPMTEAALGVALAIQDNCQRSMTSILYTGGTGGSARGGVCTHPVKITEAVHEQKAVLTIGGAPAFVYPGGGINFMVDTQKVVNKAFTWVPTPATVAPVEYTMTVADYEAMGGHMDQIKDVSEYK.

2 consecutive 4Fe-4S ferredoxin-type domains span residues 1–29 and 31–61; these read MFKI…YEKK and KGAI…NDAP. The [4Fe-4S] cluster site is built by Cys-9, Cys-12, Cys-15, Cys-19, Cys-41, Cys-44, Cys-47, and Cys-51.

In terms of assembly, homotetramer. An oxidized flavin is required as a cofactor. [2Fe-2S] cluster serves as cofactor. It depends on [4Fe-4S] cluster as a cofactor.

The enzyme catalyses 1,4,5,6-tetrahydro-6-oxonicotinate + oxidized 2[4Fe-4S]-[ferredoxin] = 6-hydroxynicotinate + reduced 2[4Fe-4S]-[ferredoxin] + 2 H(+). It participates in cofactor degradation; nicotinate degradation; propanoate and pyruvate from 6-hydroxynicotinate: step 1/8. Catalyzes the reversible reduction of 6-hydroxynicotinate to 6-oxo-1,4,5,6-tetrahydronicotinate. The sequence is that of 6-hydroxynicotinate reductase from Eubacterium barkeri (Clostridium barkeri).